A 340-amino-acid polypeptide reads, in one-letter code: METSALKQQEQPAATKIRNLPWVEKYRPQTLNDLISHQDILSTIQKFINEDRLPHLLLYGPPGTGKTSTILACAKQLYKDKEFGSMVLELNASDDRGIDIIRGPILSFASTRTIFKKGFKLVILDEADAMTQDAQNALRRVIEKFTENTRFCLICNYLSKIIPALQSRCTRFRFGPLTPELMVPRLEHVVEEEKVDISEDGMKALVTLSSGDMRRALNILQSTNMAFGKVTEETVYTCTGHPLKSDIANILDWMLNQDFTTAYRNITELKTLKGLALHDILTEIHLFVHRVDFPSSVRIHLLTKMADIEYRLSVGTNEKIQLSSLIAAFQVTRDLIVAEA.

Met-1 is subject to N-acetylmethionine. An ATP-binding site is contributed by Gly-60–Thr-67.

The protein belongs to the activator 1 small subunits family. As to quaternary structure, subunit of the RFC complex, an heteropentameric complex consisting of a large subunit RFC1 and four small subunits RFC2, RFC3, RFC4 and RFC5; the RFC complex interacts with PCNA. Forms an heterotetrameric complex with RFC2, RFC3 and RFC4; this complex has ATPase activity but is not stimulated by PCNA. The heterotetramer of subunits RFC2, RFC3, RFC4 and RFC5 interacts with RAD17.

It localises to the nucleus. In terms of biological role, subunit of the replication factor C (RFC) complex which acts during elongation of primed DNA templates by DNA polymerases delta and epsilon, and is necessary for ATP-dependent loading of proliferating cell nuclear antigen (PCNA) onto primed DNA. The polypeptide is Replication factor C subunit 5 (RFC5) (Homo sapiens (Human)).